A 595-amino-acid chain; its full sequence is Coagulation factor XII (595 aa).

Positions 1-19 are cleaved as a signal peptide; it reads MTALLFLGSLLMSLDLTLS. One can recognise a Fibronectin type-II domain in the interval 41–89; that stretch reads VDGKLCHFPFQYHRRLYHKCIHKGQPGSRPWCATTPNFDEDQQWGYCLE. 13 disulfide bridges follow: Cys-46/Cys-72, Cys-60/Cys-87, Cys-97/Cys-109, Cys-103/Cys-118, Cys-120/Cys-129, Cys-134/Cys-162, Cys-160/Cys-169, Cys-177/Cys-188, Cys-182/Cys-197, Cys-199/Cys-208, Cys-216/Cys-294, Cys-237/Cys-276, and Cys-265/Cys-289. The EGF-like 1 domain maps to 93 to 130; that stretch reads VKDHCSKHSPCHKGGTCVNTPNGPHCLCPEHLTGKHCQ. Thr-108 is a glycosylation site (O-linked (Fuc) threonine). The region spanning 132-172 is the Fibronectin type-I domain; the sequence is EKCFESQLLKFFHENEIWFRTGPGGVARCQCKGPQAVCKLL. The region spanning 173-209 is the EGF-like 2 domain; sequence TSQVCRVNPCLNGGTCLLVEDHRLCHCPAGYAGPFCD. One can recognise a Kringle domain in the interval 215-294; it reads TCYEDRGLSY…SWDYCDLEQC (80 aa). N-linked (GlcNAc...) asparagine glycosylation is present at Asn-248. Thr-298 carries an O-linked (GalNAc...) threonine glycan. Positions 302–332 are disordered; it reads PVSPESHDMLKPRPPILQSSPRDSTRNQNVV. Ser-307 is a glycosylation site (O-linked (GalNAc...) serine). The span at 318–332 shows a compositional bias: polar residues; it reads LQSSPRDSTRNQNVV. The O-linked (GalNAc...) threonine glycan is linked to Thr-326. Cystine bridges form between Cys-340–Cys-466, Cys-378–Cys-394, Cys-386–Cys-455, Cys-417–Cys-420, Cys-480–Cys-549, Cys-512–Cys-528, and Cys-539–Cys-570. The region spanning 354–594 is the Peptidase S1 domain; that stretch reads VVGGLVALPG…YLDWIQEHTA (241 aa). The active-site Charge relay system is the His-393. Asn-414 carries N-linked (GlcNAc...) asparagine glycosylation. The Charge relay system role is filled by Asp-442. Residue Ser-543 is the Charge relay system of the active site.

The protein belongs to the peptidase S1 family. In terms of assembly, interacts with HRG; the interaction, which is enhanced in the presence of zinc ions and inhibited by heparin-binding, inhibits factor XII autoactivation and contact-initiated coagulation. Post-translationally, O- and N-glycosylated.

Its subcellular location is the secreted. The enzyme catalyses Selective cleavage of Arg-|-Ile bonds in factor VII to form factor VIIa and factor XI to form factor XIa.. With respect to regulation, activity is promoted in the presence of negatively charged surfaces. In terms of biological role, factor XII is a serum glycoprotein that participates in the initiation of blood coagulation, fibrinolysis, and the generation of bradykinin and angiotensin. Prekallikrein is cleaved by factor XII to form kallikrein, which then cleaves factor XII first to alpha-factor XIIa and then trypsin cleaves it to beta-factor XIIa. Alpha-factor XIIa activates factor XI to factor XIa. The polypeptide is Coagulation factor XII (F12) (Rattus norvegicus (Rat)).